A 207-amino-acid chain; its full sequence is LPS-assembly lipoprotein LptE (207 aa).

The signal sequence occupies residues 1 to 19 (MRHRILMLLLGLAVLVTAG). A lipid anchor (N-palmitoyl cysteine) is attached at Cys20. Cys20 carries the S-diacylglycerol cysteine lipid modification.

This sequence belongs to the LptE lipoprotein family. In terms of assembly, component of the lipopolysaccharide transport and assembly complex. Interacts with LptD.

The protein localises to the cell outer membrane. Together with LptD, is involved in the assembly of lipopolysaccharide (LPS) at the surface of the outer membrane. Required for the proper assembly of LptD. Binds LPS and may serve as the LPS recognition site at the outer membrane. This Yersinia enterocolitica serotype O:8 / biotype 1B (strain NCTC 13174 / 8081) protein is LPS-assembly lipoprotein LptE.